Here is a 212-residue protein sequence, read N- to C-terminus: Ropporin-1A (212 aa).

One can recognise an RIIa domain in the interval 12–49 (PELPKMLKEFAKAAIRVQPQDLIQWAADYFEALSRGET). At Ser56 the chain carries Phosphoserine. The tract at residues 209–212 (VQLE) is interaction with RHPN1.

The protein belongs to the ropporin family. As to quaternary structure, homodimer. Interacts with AKAP3 and RHPN1. May interact with SPA17. Interacts with FSCB; the interaction increases upon spermatozoa capacitation conditions. Interacts with CFAP61. Post-translationally, sumoylated, sumoylation decreases upon spermatozoa capacitation conditions. As to expression, testis specific in adult. Overexpressed in hematologic tumor cells.

Its subcellular location is the cell projection. The protein resides in the cilium. It localises to the flagellum. Important for male fertility. With ROPN1L, involved in fibrous sheath integrity and sperm motility, plays a role in PKA-dependent signaling processes required for spermatozoa capacitation. The polypeptide is Ropporin-1A (ROPN1) (Homo sapiens (Human)).